A 206-amino-acid polypeptide reads, in one-letter code: Guanylate kinase (206 aa).

The Guanylate kinase-like domain maps to 4-182 (ANLFIISAPS…AVQNLIHIIS (179 aa)). 11 to 18 (APSGAGKT) is a binding site for ATP.

The protein belongs to the guanylate kinase family.

It localises to the cytoplasm. It catalyses the reaction GMP + ATP = GDP + ADP. Its function is as follows. Essential for recycling GMP and indirectly, cGMP. The sequence is that of Guanylate kinase from Coxiella burnetii (strain RSA 493 / Nine Mile phase I).